The chain runs to 138 residues: Nucleoside diphosphate kinase (138 aa).

K9, F57, R85, T91, R102, and N112 together coordinate ATP. H120 serves as the catalytic Pros-phosphohistidine intermediate.

The protein belongs to the NDK family. In terms of assembly, homotetramer. The cofactor is Mg(2+).

The protein resides in the cytoplasm. It catalyses the reaction a 2'-deoxyribonucleoside 5'-diphosphate + ATP = a 2'-deoxyribonucleoside 5'-triphosphate + ADP. The enzyme catalyses a ribonucleoside 5'-diphosphate + ATP = a ribonucleoside 5'-triphosphate + ADP. In terms of biological role, major role in the synthesis of nucleoside triphosphates other than ATP. The ATP gamma phosphate is transferred to the NDP beta phosphate via a ping-pong mechanism, using a phosphorylated active-site intermediate. The chain is Nucleoside diphosphate kinase from Streptococcus agalactiae serotype III (strain NEM316).